The sequence spans 1055 residues: Kinesin-like protein KIN-7D, mitochondrial (1055 aa).

The segment covering 1–23 (MASSSSRTRSSRPPSPASSTSSS) has biased composition (low complexity). The tract at residues 1–36 (MASSSSRTRSSRPPSPASSTSSSHLSNRLIPRSNST) is disordered. Residues 1-96 (MASSSSRTRS…PMDDTISSER (96 aa)) constitute a mitochondrion transit peptide. A Kinesin motor domain is found at 98-415 (SISVTVRFRP…LKFASRAKSI (318 aa)). Position 178 to 185 (178 to 185 (GVTSSGKT)) interacts with ATP. Coiled-coil stretches lie at residues 419-503 (ASRN…ILVS), 618-653 (PENS…GEAS), and 694-823 (LQEK…LAQT). Residues 826–856 (PMNGVNRKYNDGARSGRKGRISSSRSSGDEF) form a disordered region. The stretch at 880–911 (LESALAEKEFIEDEYRKKAEEAKRREEALEND) forms a coiled coil. Residues 926 to 963 (NGALPEPNGTDPGRELEKSQSHAVLKERQVSSAPRQPE) form a disordered region. A compositionally biased stretch (basic and acidic residues) spans 937-954 (PGRELEKSQSHAVLKERQ). The segment at 1008–1043 (CKVCFESPTAAILLPCRHFCLCKSCSLACSECPICR) adopts an RING-type zinc-finger fold.

This sequence belongs to the TRAFAC class myosin-kinesin ATPase superfamily. Kinesin family. KIN-7 subfamily.

The protein resides in the mitochondrion. This is Kinesin-like protein KIN-7D, mitochondrial from Arabidopsis thaliana (Mouse-ear cress).